An 851-amino-acid polypeptide reads, in one-letter code: Alanine--tRNA ligase (851 aa).

H554, H558, C656, and H660 together coordinate Zn(2+).

It belongs to the class-II aminoacyl-tRNA synthetase family. The cofactor is Zn(2+).

Its subcellular location is the cytoplasm. The enzyme catalyses tRNA(Ala) + L-alanine + ATP = L-alanyl-tRNA(Ala) + AMP + diphosphate. Functionally, catalyzes the attachment of alanine to tRNA(Ala) in a two-step reaction: alanine is first activated by ATP to form Ala-AMP and then transferred to the acceptor end of tRNA(Ala). Also edits incorrectly charged Ser-tRNA(Ala) and Gly-tRNA(Ala) via its editing domain. In Aliarcobacter butzleri (strain RM4018) (Arcobacter butzleri), this protein is Alanine--tRNA ligase.